Consider the following 623-residue polypeptide: Pyranose 2-oxidase (623 aa).

Positions 1–27 (MSTSSSDPFFNFTKSSFRSAAAQKASA) are cleaved as a signal peptide. Residues 28–38 (TSLPPLPGPDK) constitute a propeptide that is removed on maturation. Tele-8alpha-FAD histidine is present on histidine 167. Positions 448 and 450 each coordinate substrate. The Proton acceptor role is filled by histidine 548. Asparagine 593 is an active-site residue.

It belongs to the GMC oxidoreductase family. Homotetramer. Requires FAD as cofactor. Not glycosylated.

It is found in the periplasm. It carries out the reaction D-glucose + O2 = 2-dehydro-D-glucose + H2O2. Functionally, catalyzes the oxidation of various aldopyranoses and disaccharides on carbon-2 to the corresponding 2-keto sugars concomitant with the reduction of O(2) to H(2)O(2). Plays an important role in lignin degradation of wood rot fungi by supplying the essential cosubstrate H(2)O(2) for the ligninolytic peroxidases, lignin peroxidase and manganese-dependent peroxidase. The preferred substrate is D-glucose which is converted to 2-dehydro-D-glucose. Also acts on D-xylose, together with D-glucose the major sugars derived from wood, on L-sorbose, D-galactose and 1,5-anhydroglucitol, a diagnostic marker of diabetes mellitus. The protein is Pyranose 2-oxidase (P2OX) of Trametes versicolor (White-rot fungus).